The sequence spans 163 residues: Small ribosomal subunit protein uS9 (163 aa).

Residues 1–41 (MAENTNDSAVLETEEELTSYTTETNAGAGTGTSTIAPGYGT) are disordered. A compositionally biased stretch (low complexity) spans 18–38 (TSYTTETNAGAGTGTSTIAPG).

Belongs to the universal ribosomal protein uS9 family.

The chain is Small ribosomal subunit protein uS9 from Bifidobacterium adolescentis (strain ATCC 15703 / DSM 20083 / NCTC 11814 / E194a).